We begin with the raw amino-acid sequence, 123 residues long: UPF0102 protein Csal_2201 (123 aa).

The protein belongs to the UPF0102 family.

In Chromohalobacter salexigens (strain ATCC BAA-138 / DSM 3043 / CIP 106854 / NCIMB 13768 / 1H11), this protein is UPF0102 protein Csal_2201.